Here is a 258-residue protein sequence, read N- to C-terminus: Tryptophan synthase alpha chain (258 aa).

Catalysis depends on proton acceptor residues Glu-47 and Asp-58.

Belongs to the TrpA family. As to quaternary structure, tetramer of two alpha and two beta chains.

It catalyses the reaction (1S,2R)-1-C-(indol-3-yl)glycerol 3-phosphate + L-serine = D-glyceraldehyde 3-phosphate + L-tryptophan + H2O. The protein operates within amino-acid biosynthesis; L-tryptophan biosynthesis; L-tryptophan from chorismate: step 5/5. The alpha subunit is responsible for the aldol cleavage of indoleglycerol phosphate to indole and glyceraldehyde 3-phosphate. The protein is Tryptophan synthase alpha chain of Bacillus thuringiensis (strain Al Hakam).